We begin with the raw amino-acid sequence, 1577 residues long: MAP kinase-activating death domain protein (1577 aa).

Positions 13–267 (YLVIVGARHP…VPVSGQKRVD (255 aa)) constitute a uDENN domain. The span at 106 to 121 (KEKVEGGAGPRGKEGA) shows a compositional bias: basic and acidic residues. Residues 106 to 166 (KEKVEGGAGP…WGKRRAKAGS (61 aa)) form a disordered region. Residues 123 to 140 (TSGASEEAATGSSESGST) are compositionally biased toward low complexity. Positions 141–156 (LQPPSADSTPDINQSP) are enriched in polar residues. Ser-155 bears the Phosphoserine mark. A cDENN domain is found at 288–428 (RFTLVDFPLH…ESLELKKHLK (141 aa)). In terms of domain architecture, dDENN spans 430-564 (ALASMSLNTQ…LNPSNYAFQR (135 aa)). Disordered stretches follow at residues 604–635 (LSVP…SSYS) and 676–840 (QPQK…NSTE). Residues 614–629 (SDPTEDSGSDSQDYDD) show a composition bias toward acidic residues. Residues Ser-688 and Ser-691 each carry the phosphoserine modification. Over residues 688-698 (SENSQENPPLR) the composition is skewed to polar residues. The span at 699-715 (SSSSTTASSSPSTVVHS) shows a compositional bias: low complexity. The segment covering 793–803 (PRFSQHVSGSR) has biased composition (polar residues). Residues Ser-812, Ser-817, and Ser-819 each carry the phosphoserine modification. Over residues 826–839 (RASSPNSTVSNNST) the composition is skewed to low complexity. Residues Ser-857, Ser-861, Ser-915, Ser-920, Ser-929, and Ser-1058 each carry the phosphoserine modification. 3 disordered regions span residues 912 to 940 (QKSS…SSEN), 1050 to 1109 (KEPD…DTRS), and 1127 to 1272 (EVKK…RSSE). Residues 928–938 (SSPQGRSSNSS) show a composition bias toward low complexity. Thr-1060 and Thr-1065 each carry phosphothreonine. Residue Ser-1109 is modified to Phosphoserine. Residues 1127–1141 (EVKKQKALEKQRPEG) show a composition bias toward basic and acidic residues. Polar residues predominate over residues 1157–1172 (QMSADSGVSLTSASQR). Residues 1189-1203 (SSSQDSEVSTVSNSS) are compositionally biased toward low complexity. Polar residues predominate over residues 1232-1248 (SRATLSDSEIETNSATS). Thr-1235 carries the phosphothreonine modification. 2 positions are modified to phosphoserine: Ser-1237 and Ser-1266. Residues 1336 to 1411 (GMDQGPQEMI…GLVYSQQVNE (76 aa)) form the Death domain.

The protein belongs to the MADD family. In terms of assembly, interacts (via death domain) with TNFRSF1A (via death domain). Interacts with PIDD1. Interacts with YWHAZ. Interacts (via death domain) with KIF1B; links the motor KIF1B to Rab3-carrying vesicles in anterograde synaptic vesicle transport. Interacts with KIF1A. Interacts (via uDENN domain) with RAB3A, RAB3B, RAB3C and RAB3D; the GTP-bound form of the Rab proteins is preferred for interaction. As to expression, expressed in the brain.

Its subcellular location is the cell membrane. It localises to the cytoplasm. The protein resides in the cell projection. It is found in the axon. Its function is as follows. Guanyl-nucleotide exchange factor that regulates small GTPases of the Rab family. Converts GDP-bound inactive form of RAB27A and RAB27B to the GTP-bound active forms. Converts GDP-bound inactive form of RAB3A, RAB3C and RAB3D to the GTP-bound active forms, GTPases involved in synaptic vesicle exocytosis and vesicle secretion. Plays a role in synaptic vesicle formation and in vesicle trafficking at the neuromuscular junction. Involved in up-regulating a post-docking step of synaptic exocytosis in central synapses. Probably by binding to the motor proteins KIF1B and KIF1A, mediates motor-dependent transport of GTP-RAB3A-positive vesicles to the presynaptic nerve terminals. Plays a role in TNFA-mediated activation of the MAPK pathway, including ERK1/2. May link TNFRSF1A with MAP kinase activation. May be involved in the regulation of TNFA-induced apoptosis. This Mus musculus (Mouse) protein is MAP kinase-activating death domain protein.